Consider the following 163-residue polypeptide: MKSVITTTISARDAAGRFPSRSDLESVQGNIQRSAARLEAAEKISAGHEGVVKEAGDACFAKYTYLKTSGEAGDSQDKVNKCYRDIDHYMRLINYSLVVGGTGPLDEWGIAGAREVYRALNLPASAYIAAFAYTRDRVCVPRDMSAQAAVEFIGALDYVNSLS.

2 residues coordinate (2R,3E)-phycoerythrobilin: Cys82 and Cys139.

The protein belongs to the phycobiliprotein family. Heterodimer of an alpha and a beta chain. Contains two covalently linked bilin chromophores.

The protein resides in the plastid. Its subcellular location is the chloroplast thylakoid membrane. Light-harvesting photosynthetic bile pigment-protein from the phycobiliprotein complex. This Aglaothamnion neglectum (Red alga) protein is R-phycoerythrin alpha chain (cpeA).